A 74-amino-acid chain; its full sequence is Large ribosomal subunit protein bL28 (74 aa).

It belongs to the bacterial ribosomal protein bL28 family.

The chain is Large ribosomal subunit protein bL28 from Buchnera aphidicola subsp. Baizongia pistaciae (strain Bp).